The chain runs to 117 residues: Glycine cleavage system H-like protein (117 aa).

Positions 21 to 103 (IVKLGLSSQM…ESEGWFVVLQ (83 aa)) constitute a Lipoyl-binding domain. K62 is modified (N6-lipoyllysine).

This sequence belongs to the GcvH family. The cofactor is (R)-lipoate.

This Chlamydia trachomatis serovar D (strain ATCC VR-885 / DSM 19411 / UW-3/Cx) protein is Glycine cleavage system H-like protein.